Consider the following 95-residue polypeptide: Neutrophil antibiotic peptide NP-5 (95 aa).

Positions 1-19 (MRTLALLAAILLVTLQAQA) are cleaved as a signal peptide. A propeptide spanning residues 20 to 62 (ELHSGMADDGVDQQQPRAQDLDVAVYIKQDETSPLEVLGAKAG) is cleaved from the precursor. Disulfide bonds link C65–C93, C67–C82, and C72–C92.

This sequence belongs to the alpha-defensin family.

It is found in the secreted. Functionally, microbicidal activity. The chain is Neutrophil antibiotic peptide NP-5 from Oryctolagus cuniculus (Rabbit).